Consider the following 121-residue polypeptide: Large ribosomal subunit protein bL12 (121 aa).

Belongs to the bacterial ribosomal protein bL12 family. As to quaternary structure, homodimer. Part of the ribosomal stalk of the 50S ribosomal subunit. Forms a multimeric L10(L12)X complex, where L10 forms an elongated spine to which 2 to 4 L12 dimers bind in a sequential fashion. Binds GTP-bound translation factors.

Functionally, forms part of the ribosomal stalk which helps the ribosome interact with GTP-bound translation factors. Is thus essential for accurate translation. The sequence is that of Large ribosomal subunit protein bL12 from Psychromonas ingrahamii (strain DSM 17664 / CCUG 51855 / 37).